Here is a 201-residue protein sequence, read N- to C-terminus: Prostamide/prostaglandin F synthase (201 aa).

The protein belongs to the peroxiredoxin-like PRXL2 family. Prostamide/prostaglandin F synthase subfamily.

Its subcellular location is the cytoplasm. It localises to the cytosol. It carries out the reaction prostaglandin H2 + [thioredoxin]-dithiol = prostaglandin F2alpha + [thioredoxin]-disulfide. The catalysed reaction is prostamide F2alpha + [thioredoxin]-disulfide = prostamide H2 + [thioredoxin]-dithiol. Catalyzes the reduction of prostaglandin-ethanolamide H(2) (prostamide H(2)) to prostamide F(2alpha) with NADPH as proton donor. Also able to reduce prostaglandin H(2) to prostaglandin F(2alpha). The sequence is that of Prostamide/prostaglandin F synthase (prxl2b) from Danio rerio (Zebrafish).